We begin with the raw amino-acid sequence, 1158 residues long: ATP-dependent helicase/deoxyribonuclease subunit B (1158 aa).

8–15 provides a ligand contact to ATP; it reads GRAGTGKS. [4Fe-4S] cluster contacts are provided by Cys-791, Cys-1112, Cys-1115, and Cys-1121.

It belongs to the helicase family. AddB/RexB type 1 subfamily. As to quaternary structure, heterodimer of AddA and AddB. The cofactor is Mg(2+). [4Fe-4S] cluster is required as a cofactor.

Functionally, the heterodimer acts as both an ATP-dependent DNA helicase and an ATP-dependent, dual-direction single-stranded exonuclease. Recognizes the chi site generating a DNA molecule suitable for the initiation of homologous recombination. The AddB subunit has 5' -&gt; 3' nuclease activity but not helicase activity. The polypeptide is ATP-dependent helicase/deoxyribonuclease subunit B (Clostridium perfringens (strain SM101 / Type A)).